A 652-amino-acid chain; its full sequence is Engulfment and cell motility protein 3 (652 aa).

One can recognise an ELMO domain in the interval 307 to 479 (EQREQLQALR…VVREQLARTL (173 aa)).

As to quaternary structure, probably interacts directly with the SH3-domain of DOCK1 via its SH3-binding site. Part of a complex with DOCK1 and RAC1. Interacts with ADGRB3.

The protein resides in the cytoplasm. In terms of biological role, involved in cytoskeletal rearrangements required for phagocytosis of apoptotic cells and cell motility. Acts in association with DOCK1 and CRK. Was initially proposed to be required in complex with DOCK1 to activate Rac Rho small GTPases. May enhance the guanine nucleotide exchange factor (GEF) activity of DOCK1. This Bos taurus (Bovine) protein is Engulfment and cell motility protein 3 (ELMO3).